We begin with the raw amino-acid sequence, 137 residues long: Aspartate 1-decarboxylase (137 aa).

The active-site Schiff-base intermediate with substrate; via pyruvic acid is the serine 25. A Pyruvic acid (Ser) modification is found at serine 25. Threonine 57 provides a ligand contact to substrate. Residue tyrosine 58 is the Proton donor of the active site. Position 73–75 (glycine 73–alanine 75) interacts with substrate.

It belongs to the PanD family. In terms of assembly, heterooctamer of four alpha and four beta subunits. Requires pyruvate as cofactor. In terms of processing, is synthesized initially as an inactive proenzyme, which is activated by self-cleavage at a specific serine bond to produce a beta-subunit with a hydroxyl group at its C-terminus and an alpha-subunit with a pyruvoyl group at its N-terminus.

It is found in the cytoplasm. The enzyme catalyses L-aspartate + H(+) = beta-alanine + CO2. The protein operates within cofactor biosynthesis; (R)-pantothenate biosynthesis; beta-alanine from L-aspartate: step 1/1. Catalyzes the pyruvoyl-dependent decarboxylation of aspartate to produce beta-alanine. This is Aspartate 1-decarboxylase from Thermobifida fusca (strain YX).